The chain runs to 888 residues: Calcium-transporting ATPase 1 (888 aa).

The next 4 membrane-spanning stretches (helical) occupy residues I53–V75, A79–V97, V246–F266, and A283–V303. Ca(2+) is bound by residues V284, A285, I287, and E289. D331 (4-aspartylphosphate intermediate) is an active-site residue. Helical transmembrane passes span I675–L695, P703–V723, V747–A767, L791–F811, L831–L851, and W865–A885. Ca(2+)-binding residues include N710 and D714.

This sequence belongs to the cation transport ATPase (P-type) (TC 3.A.3) family. Type IIA subfamily.

It is found in the cell membrane. The enzyme catalyses Ca(2+)(in) + ATP + H2O = Ca(2+)(out) + ADP + phosphate + H(+). With respect to regulation, inhibited by cyclopiazonic acid (CPA). In terms of biological role, catalyzes the hydrolysis of ATP coupled with the transport of calcium. The polypeptide is Calcium-transporting ATPase 1 (Bacillus cereus (strain ATCC 10987 / NRS 248)).